The primary structure comprises 267 residues: Glucosamine-6-phosphate deaminase (267 aa).

The active-site Proton acceptor; for enolization step is the aspartate 72. The active-site For ring-opening step is aspartate 141. Histidine 143 (proton acceptor; for ring-opening step) is an active-site residue. Glutamate 148 serves as the catalytic For ring-opening step.

The protein belongs to the glucosamine/galactosamine-6-phosphate isomerase family. NagB subfamily. As to quaternary structure, homohexamer.

It carries out the reaction alpha-D-glucosamine 6-phosphate + H2O = beta-D-fructose 6-phosphate + NH4(+). Its pathway is amino-sugar metabolism; N-acetylneuraminate degradation; D-fructose 6-phosphate from N-acetylneuraminate: step 5/5. With respect to regulation, allosterically activated by N-acetylglucosamine 6-phosphate (GlcNAc6P). In terms of biological role, catalyzes the reversible isomerization-deamination of glucosamine 6-phosphate (GlcN6P) to form fructose 6-phosphate (Fru6P) and ammonium ion. The polypeptide is Glucosamine-6-phosphate deaminase (Mannheimia succiniciproducens (strain KCTC 0769BP / MBEL55E)).